A 575-amino-acid polypeptide reads, in one-letter code: Muellerian-inhibiting factor (575 aa).

The signal sequence occupies residues 1 to 20 (MQGPSLSQLVLVLMGALLEA). The propeptide occupies 21–466 (GTPREEVSST…ERSGPARAQR (446 aa)). Asn78 and Asn343 each carry an N-linked (GlcNAc...) asparagine glycan. Intrachain disulfides connect Cys477–Cys541, Cys503–Cys572, and Cys507–Cys574.

This sequence belongs to the TGF-beta family. As to quaternary structure, homodimer; disulfide-linked. Post-translationally, preproprotein is proteolytically processed to generate N- and C-terminal cleavage products that homodimerize and associate to form a biologically active non-covalent complex. Binding of the non-covalent complex to AMHR2 induces dissociation of the pro-region from the mature C-terminal dimer. The N-terminal portion of the protein, despite having no intrinsic activity, has the role of amplifying the activity of the C-terminus. As to expression, detected in fetal Sertoli cells. Expressed in granulosa cells of growing follicles but also in theca cells of preovulatory follicles and corpora lutea (at protein level).

It localises to the secreted. In terms of biological role, plays an important role in several reproductive functions. Induces Muellerian duct regression during male fetal sexual differentiation and plays a role in Leydig cell differentiation and function. In female acts as a negative regulator of the primordial to primary follicle transition and decreases FSH sensitivity of growing follicles. AMH signals by binding to a specific type-II receptor, AMHR2, that heterodimerizes with type-I receptors (ACVR1 and BMPR1A), and recruiting SMAD proteins that are translocated to the nucleus to regulate target gene expression. The sequence is that of Muellerian-inhibiting factor (AMH) from Sus scrofa (Pig).